A 630-amino-acid chain; its full sequence is tRNA uridine 5-carboxymethylaminomethyl modification enzyme MnmG (630 aa).

Position 13 to 18 (13 to 18) interacts with FAD; the sequence is GGGHAG. 273–287 serves as a coordination point for NAD(+); sequence GPRYCPSIEDKVMRF.

The protein belongs to the MnmG family. In terms of assembly, homodimer. Heterotetramer of two MnmE and two MnmG subunits. FAD is required as a cofactor.

The protein resides in the cytoplasm. NAD-binding protein involved in the addition of a carboxymethylaminomethyl (cmnm) group at the wobble position (U34) of certain tRNAs, forming tRNA-cmnm(5)s(2)U34. This chain is tRNA uridine 5-carboxymethylaminomethyl modification enzyme MnmG, found in Actinobacillus pleuropneumoniae serotype 5b (strain L20).